Here is a 249-residue protein sequence, read N- to C-terminus: Ubiquinone/menaquinone biosynthesis C-methyltransferase UbiE (249 aa).

Residues Thr72, Asp93, and 121–122 (DA) contribute to the S-adenosyl-L-methionine site.

It belongs to the class I-like SAM-binding methyltransferase superfamily. MenG/UbiE family.

It carries out the reaction a 2-demethylmenaquinol + S-adenosyl-L-methionine = a menaquinol + S-adenosyl-L-homocysteine + H(+). The catalysed reaction is a 2-methoxy-6-(all-trans-polyprenyl)benzene-1,4-diol + S-adenosyl-L-methionine = a 5-methoxy-2-methyl-3-(all-trans-polyprenyl)benzene-1,4-diol + S-adenosyl-L-homocysteine + H(+). The protein operates within quinol/quinone metabolism; menaquinone biosynthesis; menaquinol from 1,4-dihydroxy-2-naphthoate: step 2/2. Its pathway is cofactor biosynthesis; ubiquinone biosynthesis. Methyltransferase required for the conversion of demethylmenaquinol (DMKH2) to menaquinol (MKH2) and the conversion of 2-polyprenyl-6-methoxy-1,4-benzoquinol (DDMQH2) to 2-polyprenyl-3-methyl-6-methoxy-1,4-benzoquinol (DMQH2). In Saccharophagus degradans (strain 2-40 / ATCC 43961 / DSM 17024), this protein is Ubiquinone/menaquinone biosynthesis C-methyltransferase UbiE.